A 180-amino-acid polypeptide reads, in one-letter code: ATP-dependent Clp protease proteolytic subunit 2 (180 aa).

Residue Ser-86 is the Nucleophile of the active site. His-111 is a catalytic residue.

This sequence belongs to the peptidase S14 family. Fourteen ClpP subunits assemble into 2 heptameric rings which stack back to back to give a disk-like structure with a central cavity, resembling the structure of eukaryotic proteasomes.

Its subcellular location is the cytoplasm. It carries out the reaction Hydrolysis of proteins to small peptides in the presence of ATP and magnesium. alpha-casein is the usual test substrate. In the absence of ATP, only oligopeptides shorter than five residues are hydrolyzed (such as succinyl-Leu-Tyr-|-NHMec, and Leu-Tyr-Leu-|-Tyr-Trp, in which cleavage of the -Tyr-|-Leu- and -Tyr-|-Trp bonds also occurs).. Cleaves peptides in various proteins in a process that requires ATP hydrolysis. Has a chymotrypsin-like activity. Plays a major role in the degradation of misfolded proteins. This chain is ATP-dependent Clp protease proteolytic subunit 2, found in Tropheryma whipplei (strain Twist) (Whipple's bacillus).